A 435-amino-acid polypeptide reads, in one-letter code: Protoheme IX farnesyltransferase, mitochondrial (435 aa).

The N-terminal 35 residues, 1-35, are a transit peptide targeting the mitochondrion; that stretch reads MPALCATYLIHSGNLRACLRIVPLTKPSVVIAYRH. Transmembrane regions (helical) follow at residues 135-155, 157-177, 212-232, 250-270, 324-344, and 401-421; these read VLVM…ATVL, LLSL…INMG, GVIG…LLGA, IINT…GWAA, VALR…YYGI, and FWVS…HKKG.

This sequence belongs to the UbiA prenyltransferase family.

It localises to the mitochondrion membrane. Functionally, converts protoheme IX and farnesyl diphosphate to heme O. In Eremothecium gossypii (strain ATCC 10895 / CBS 109.51 / FGSC 9923 / NRRL Y-1056) (Yeast), this protein is Protoheme IX farnesyltransferase, mitochondrial (COX10).